The primary structure comprises 577 residues: Lysine-specific demethylase 7B (577 aa).

The PHD-type zinc-finger motif lies at Q5–H56. Residues F198 to R354 form the JmjC domain. T247 is a binding site for substrate. Fe cation contacts are provided by H250 and D252. K267 contributes to the substrate binding site. H322 contacts Fe cation. The tract at residues C460–H513 is disordered. Residues H472–H502 show a composition bias toward basic residues.

The protein belongs to the JHDM1 histone demethylase family. JHDM1D subfamily. Requires Fe(2+) as cofactor. Predominantly expressed in brain.

Its subcellular location is the nucleus. Functionally, histone demethylase required for brain development. Specifically demethylates dimethylated 'Lys-9' and 'Lys-27' (H3K9me2 and H3K27me2, respectively) of histone H3 and monomethylated histone H4 'Lys-20' residue (H4K20Me1), thereby playing a central role in histone code. The protein is Lysine-specific demethylase 7B (jhdm1db) of Danio rerio (Zebrafish).